Here is a 157-residue protein sequence, read N- to C-terminus: Large ribosomal subunit protein eL24 (157 aa).

A disordered region spans residues 94-157; it reads RNQKPEVRKA…ISAPRVGGKR (64 aa). Basic and acidic residues predominate over residues 96–117; sequence QKPEVRKAQREQAIRAAKESKK. The segment covering 123–140 has biased composition (low complexity); sequence KKPAAASAKTSAKTAQKP.

The protein belongs to the eukaryotic ribosomal protein eL24 family. In terms of assembly, component of the large ribosomal subunit.

It localises to the cytoplasm. Component of the large ribosomal subunit. The ribosome is a large ribonucleoprotein complex responsible for the synthesis of proteins in the cell. The polypeptide is Large ribosomal subunit protein eL24 (rpl24) (Gillichthys mirabilis (Long-jawed mudsucker)).